Here is a 589-residue protein sequence, read N- to C-terminus: Putative adenine deaminase BC_3012 (589 aa).

The protein belongs to the metallo-dependent hydrolases superfamily. Adenine deaminase family.

The enzyme catalyses adenine + H2O + H(+) = hypoxanthine + NH4(+). The polypeptide is Putative adenine deaminase BC_3012 (Bacillus cereus (strain ATCC 14579 / DSM 31 / CCUG 7414 / JCM 2152 / NBRC 15305 / NCIMB 9373 / NCTC 2599 / NRRL B-3711)).